Reading from the N-terminus, the 335-residue chain is Urokinase plasminogen activator surface receptor (335 aa).

The first 22 residues, 1–22 (MGHPPLLPLLLLLHTCVPASWG), serve as a signal peptide directing secretion. UPAR/Ly6 domains are found at residues 23–114 (LRCM…RSRY), 115–213 (LECI…PQNG), and 214–305 (RQCY…YRSG). Disulfide bonds link cysteine 25–cysteine 46, cysteine 28–cysteine 34, and cysteine 39–cysteine 67. Asparagine 74 carries N-linked (GlcNAc...) asparagine glycosylation. 11 disulfide bridges follow: cysteine 93-cysteine 98, cysteine 117-cysteine 144, cysteine 120-cysteine 127, cysteine 137-cysteine 169, cysteine 175-cysteine 192, cysteine 193-cysteine 198, cysteine 216-cysteine 244, cysteine 219-cysteine 227, cysteine 237-cysteine 263, cysteine 269-cysteine 287, and cysteine 288-cysteine 293. Residue asparagine 124 is glycosylated (N-linked (GlcNAc...) asparagine). N-linked (GlcNAc...) asparagine glycans are attached at residues asparagine 184, asparagine 194, asparagine 222, and asparagine 255. Glycine 305 carries GPI-anchor amidated glycine lipidation. Positions 306–335 (AAPQPGPAHLSLTITLLMTARLWGGTLLWT) are cleaved as a propeptide — removed in mature form.

As to quaternary structure, monomer. Interacts (via the UPAR/Ly6 domains) with SRPX2. Interacts with MRC2. Interacts with FAP (seprase); the interaction occurs at the cell surface of invadopodia membrane. Interacts with SORL1 (via N-terminal ectodomain); this interaction decreases PLAUR internalization. The ternary complex composed of PLAUR-PLAU-SERPINE1 also interacts with SORL1. Interacts with CD82; this interaction prevents PLAUR from binding to its high affinity ligand PLAU.

It localises to the cell membrane. The protein resides in the cell projection. It is found in the invadopodium membrane. Functionally, acts as a receptor for urokinase plasminogen activator. Plays a role in localizing and promoting plasmin formation. Mediates the proteolysis-independent signal transduction activation effects of U-PA. It is subject to negative-feedback regulation by U-PA which cleaves it into an inactive form. The chain is Urokinase plasminogen activator surface receptor (PLAUR) from Pan troglodytes (Chimpanzee).